The chain runs to 177 residues: Large ribosomal subunit protein uL6 (177 aa).

This sequence belongs to the universal ribosomal protein uL6 family. In terms of assembly, part of the 50S ribosomal subunit.

This protein binds to the 23S rRNA, and is important in its secondary structure. It is located near the subunit interface in the base of the L7/L12 stalk, and near the tRNA binding site of the peptidyltransferase center. This chain is Large ribosomal subunit protein uL6, found in Rhizobium leguminosarum bv. trifolii (strain WSM2304).